A 310-amino-acid polypeptide reads, in one-letter code: tRNA uridine(34) hydroxylase (310 aa).

The Rhodanese domain maps to 124 to 218; the sequence is SDPEVLLIDT…YFEEVPQEES (95 aa). Residue Cys-178 is the Cysteine persulfide intermediate of the active site.

It belongs to the TrhO family.

The catalysed reaction is uridine(34) in tRNA + AH2 + O2 = 5-hydroxyuridine(34) in tRNA + A + H2O. Catalyzes oxygen-dependent 5-hydroxyuridine (ho5U) modification at position 34 in tRNAs. The chain is tRNA uridine(34) hydroxylase from Pseudomonas putida (strain ATCC 47054 / DSM 6125 / CFBP 8728 / NCIMB 11950 / KT2440).